Reading from the N-terminus, the 543-residue chain is Sensor histidine kinase DcuS (543 aa).

Over 1 to 20 (MRHSLPYRMLRKRPMKLSTT) the chain is Cytoplasmic. The chain crosses the membrane as a helical span at residues 21–41 (VILMVSAVLFSVLLVVHLIYF). The Periplasmic segment spans residues 42-181 (SQISDMTRDG…VTQQINDSRW (140 aa)). (R)-malate-binding positions include 107–110 (RYSH), Lys-121, 140–142 (GFL), and Arg-147. Residues 182–202 (SIIWSVLFGMLVGLIGTCILV) form a helical membrane-spanning segment. Residues 203–543 (NVLKKILFGL…IPWDGERSNR (341 aa)) lie on the Cytoplasmic side of the membrane. The region spanning 212-323 (LEPYEISTLF…IIGAISTFRD (112 aa)) is the PAS domain. In terms of domain architecture, Histidine kinase spans 346 to 538 (ERSHEFMNKL…QFFVQIPWDG (193 aa)). The residue at position 349 (His-349) is a Phosphohistidine; by autocatalysis.

Homodimer. In terms of processing, autophosphorylated. The phosphoryl group is rapidly transferred to DcuR.

It is found in the cell inner membrane. The catalysed reaction is ATP + protein L-histidine = ADP + protein N-phospho-L-histidine.. Functionally, member of the two-component regulatory system DcuR/DcuS. Involved in the C4-dicarboxylate-stimulated regulation of the genes encoding the anaerobic fumarate respiratory system (frdABCD; nuoAN; dcuB; sdhCDAB; etc.). Weakly regulates the aerobic C4-dicarboxylate transporter dctA. Activates DcuR by phosphorylation. In Escherichia coli O6:H1 (strain CFT073 / ATCC 700928 / UPEC), this protein is Sensor histidine kinase DcuS (dcuS).